Reading from the N-terminus, the 535-residue chain is WD repeat-containing protein 25 (535 aa).

2 disordered regions span residues 1 to 108 and 141 to 160; these read MASL…PRPS and DQST…RKRG. A compositionally biased stretch (polar residues) spans 141–155; sequence DQSTFESTAGNASSS. WD repeat units lie at residues 235-277, 281-320, 321-362, 365-411, 415-454, 460-501, and 504-535; these read GHRG…HCLQ, VHSE…QVFS, GQSD…VVKG, ATIQ…KISN, HERY…RMSR, GHKV…RACT, and GHTQ…KIWH.

This chain is WD repeat-containing protein 25 (Wdr25), found in Mus musculus (Mouse).